Consider the following 224-residue polypeptide: Uracil-DNA glycosylase (224 aa).

Asp-64 (proton acceptor) is an active-site residue.

This sequence belongs to the uracil-DNA glycosylase (UDG) superfamily. UNG family.

The protein localises to the cytoplasm. It catalyses the reaction Hydrolyzes single-stranded DNA or mismatched double-stranded DNA and polynucleotides, releasing free uracil.. Its function is as follows. Excises uracil residues from the DNA which can arise as a result of misincorporation of dUMP residues by DNA polymerase or due to deamination of cytosine. The chain is Uracil-DNA glycosylase from Clostridioides difficile (strain 630) (Peptoclostridium difficile).